The chain runs to 269 residues: Putative aga operon transcriptional repressor (269 aa).

An HTH deoR-type domain is found at 15–70 (TSERREQIIQRLRQQGSVQVNDLSALYGVSTVTIRNDLAFLEKQGIAVRAYGGALI). Residues 32–51 (VQVNDLSALYGVSTVTIRND) constitute a DNA-binding region (H-T-H motif).

Its function is as follows. Probable repressor for the aga operon for N-acetyl galactosamine transport and metabolism. In Escherichia coli O157:H7, this protein is Putative aga operon transcriptional repressor (agaR).